Consider the following 151-residue polypeptide: D-aminoacyl-tRNA deacylase (151 aa).

The short motif at 138–139 is the Gly-cisPro motif, important for rejection of L-amino acids element; that stretch reads GP.

The protein belongs to the DTD family. Homodimer.

The protein localises to the cytoplasm. The catalysed reaction is glycyl-tRNA(Ala) + H2O = tRNA(Ala) + glycine + H(+). It carries out the reaction a D-aminoacyl-tRNA + H2O = a tRNA + a D-alpha-amino acid + H(+). Its function is as follows. An aminoacyl-tRNA editing enzyme that deacylates mischarged D-aminoacyl-tRNAs. Also deacylates mischarged glycyl-tRNA(Ala), protecting cells against glycine mischarging by AlaRS. Acts via tRNA-based rather than protein-based catalysis; rejects L-amino acids rather than detecting D-amino acids in the active site. By recycling D-aminoacyl-tRNA to D-amino acids and free tRNA molecules, this enzyme counteracts the toxicity associated with the formation of D-aminoacyl-tRNA entities in vivo and helps enforce protein L-homochirality. This chain is D-aminoacyl-tRNA deacylase, found in Picosynechococcus sp. (strain ATCC 27264 / PCC 7002 / PR-6) (Agmenellum quadruplicatum).